Consider the following 284-residue polypeptide: 2-dehydro-3-deoxyphosphooctonate aldolase (284 aa).

This sequence belongs to the KdsA family.

It localises to the cytoplasm. It carries out the reaction D-arabinose 5-phosphate + phosphoenolpyruvate + H2O = 3-deoxy-alpha-D-manno-2-octulosonate-8-phosphate + phosphate. The protein operates within carbohydrate biosynthesis; 3-deoxy-D-manno-octulosonate biosynthesis; 3-deoxy-D-manno-octulosonate from D-ribulose 5-phosphate: step 2/3. It functions in the pathway bacterial outer membrane biogenesis; lipopolysaccharide biosynthesis. This Actinobacillus pleuropneumoniae serotype 7 (strain AP76) protein is 2-dehydro-3-deoxyphosphooctonate aldolase.